The primary structure comprises 202 residues: Casparian strip membrane protein 4 (202 aa).

Topologically, residues 1–40 (MKSDSIAVDVPAESSSAIKGKAPLLGLARDHTGSGGYKRG) are cytoplasmic. The helical transmembrane segment at 41 to 61 (LSIFDFLLRLAAIVAALAAAA) threads the bilayer. At 62 to 90 (TMGTSDETLPFFTQFLQFEASYDDLPTFQ) the chain is on the extracellular side. Residues 91 to 111 (FFVVAIAIVTGYLVLSLPFSV) traverse the membrane as a helical segment. Residues 112–130 (VTIVRPLAVAPRLLLLVLD) are Cytoplasmic-facing. A helical transmembrane segment spans residues 131 to 151 (TAALALDTAAASAAAAIVYLA). At 152-176 (HNGNTNTNWLPICQQFGDFCQKTSG) the chain is on the extracellular side. Residues 177 to 197 (AVVSAFASVTFLAILVVISGV) form a helical membrane-spanning segment. At 198–202 (SLKRP) the chain is on the cytoplasmic side.

The protein belongs to the Casparian strip membrane proteins (CASP) family. As to quaternary structure, homodimer and heterodimers.

The protein localises to the cell membrane. In terms of biological role, regulates membrane-cell wall junctions and localized cell wall deposition. Required for establishment of the Casparian strip membrane domain (CSD) and the subsequent formation of Casparian strips, a cell wall modification of the root endodermis that determines an apoplastic barrier between the intraorganismal apoplasm and the extraorganismal apoplasm and prevents lateral diffusion. In Arabidopsis lyrata subsp. lyrata (Lyre-leaved rock-cress), this protein is Casparian strip membrane protein 4.